Consider the following 146-residue polypeptide: Snake venom vascular endothelial growth factor toxin (146 aa).

A signal peptide spans 1-24 (MAAYLLAVAILFCIQGWPLGTVQG). The residue at position 25 (glutamine 25) is a Pyrrolidone carboxylic acid. Cystine bridges form between cysteine 38/cysteine 80, cysteine 69/cysteine 115, and cysteine 73/cysteine 117. The tract at residues 118-146 (RPRSASGVNSRKHKRNPEEGEQRAKFPFV) is disordered. Residues 133–146 (NPEEGEQRAKFPFV) show a composition bias toward basic and acidic residues.

This sequence belongs to the PDGF/VEGF growth factor family. Snake venom VEGF subfamily. As to quaternary structure, homodimer; disulfide-linked. Interacts with VEGF receptor-1 (FLT1) with a high affinity, whereas it binds to VEGF receptor-2 (KDR) with a low affinity. Does not bind VEGF receptor-3 (FLT4). Expressed by the venom gland.

The protein localises to the secreted. Functionally, snake venom VEGFs that may contribute to venom dispersion and prey subjugation by inducing vascular permeability and hypotension. This protein induces an increase in capillary permeability after intradermal injection, as well as a drastic hypotensive effect after intravenous injection. The hypotension is mediated by nitric oxide (NO), which is produced by VEGF-activated endothelium NO synthase. Also induces angiogenesis in vitro. Like other crotalid VEGFs, this protein interacts with VEGF receptor-1 (FLT1) with a high affinity, whereas it binds to VEGF receptor-2 (KDR) with a low affinity. This chain is Snake venom vascular endothelial growth factor toxin, found in Bothrops erythromelas (Caatinga lance head).